A 546-amino-acid polypeptide reads, in one-letter code: CTP synthase (546 aa).

The interval 1–269 (MNSNTKIIFV…DAKLVELLNL (269 aa)) is amidoligase domain. Ser16 provides a ligand contact to CTP. Ser16 is a UTP binding site. ATP-binding positions include 17–22 (SLGKGV) and Asp74. The Mg(2+) site is built by Asp74 and Glu143. CTP is bound by residues 150–152 (DIE), 190–195 (KTKPTQ), and Lys226. UTP is bound by residues 190-195 (KTKPTQ) and Lys226. The Glutamine amidotransferase type-1 domain occupies 294 to 546 (IIAMVGKYVS…IQAAIENSNN (253 aa)). L-glutamine is bound at residue Gly356. Catalysis depends on Cys383, which acts as the Nucleophile; for glutamine hydrolysis. L-glutamine contacts are provided by residues 384 to 387 (LGMQ), Glu407, and Arg474. Catalysis depends on residues His519 and Glu521.

The protein belongs to the CTP synthase family. Homotetramer.

It carries out the reaction UTP + L-glutamine + ATP + H2O = CTP + L-glutamate + ADP + phosphate + 2 H(+). The catalysed reaction is L-glutamine + H2O = L-glutamate + NH4(+). It catalyses the reaction UTP + NH4(+) + ATP = CTP + ADP + phosphate + 2 H(+). It functions in the pathway pyrimidine metabolism; CTP biosynthesis via de novo pathway; CTP from UDP: step 2/2. Allosterically activated by GTP, when glutamine is the substrate; GTP has no effect on the reaction when ammonia is the substrate. The allosteric effector GTP functions by stabilizing the protein conformation that binds the tetrahedral intermediate(s) formed during glutamine hydrolysis. Inhibited by the product CTP, via allosteric rather than competitive inhibition. Catalyzes the ATP-dependent amination of UTP to CTP with either L-glutamine or ammonia as the source of nitrogen. Regulates intracellular CTP levels through interactions with the four ribonucleotide triphosphates. The sequence is that of CTP synthase from Francisella tularensis subsp. holarctica (strain FTNF002-00 / FTA).